A 148-amino-acid chain; its full sequence is UPF0756 membrane protein YeaL (148 aa).

A run of 4 helical transmembrane segments spans residues 14-34 (ALGF…LIIV), 51-71 (LSIG…SGTL), 86-106 (LVAI…VTLM), and 121-141 (VLGV…AGLV).

This sequence belongs to the UPF0756 family.

It localises to the cell membrane. The chain is UPF0756 membrane protein YeaL from Escherichia coli O127:H6 (strain E2348/69 / EPEC).